The chain runs to 202 residues: Glycerol-3-phosphate acyltransferase (202 aa).

A run of 6 helical transmembrane segments spans residues 3 to 23, 61 to 81, 87 to 107, 117 to 137, 144 to 164, and 167 to 187; these read NLII…LILT, IATI…LKFL, LLWS…YLLF, AGAM…VWAV, ISSL…FIFN, and LEIH…YKHL.

The protein belongs to the PlsY family. As to quaternary structure, probably interacts with PlsX.

It is found in the cell inner membrane. It carries out the reaction an acyl phosphate + sn-glycerol 3-phosphate = a 1-acyl-sn-glycero-3-phosphate + phosphate. It functions in the pathway lipid metabolism; phospholipid metabolism. Catalyzes the transfer of an acyl group from acyl-phosphate (acyl-PO(4)) to glycerol-3-phosphate (G3P) to form lysophosphatidic acid (LPA). This enzyme utilizes acyl-phosphate as fatty acyl donor, but not acyl-CoA or acyl-ACP. The chain is Glycerol-3-phosphate acyltransferase from Campylobacter jejuni subsp. doylei (strain ATCC BAA-1458 / RM4099 / 269.97).